The primary structure comprises 310 residues: Alpha/beta hydrolase domain-containing protein 17A (310 aa).

Residues Ser-190, Asp-255, and His-284 each act as charge relay system in the active site. Ser-307 is subject to Phosphoserine.

It belongs to the AB hydrolase superfamily. ABHD17 family. In terms of processing, palmitoylated on cysteine residues located in a cysteine cluster at the N-terminus which promotes membrane localization. Palmitoylation is required for post-synaptic localization and for depalmitoylating activity towards DLG4/PSD95.

It localises to the cell membrane. The protein resides in the endosome membrane. Its subcellular location is the cell projection. It is found in the dendritic spine. The protein localises to the postsynaptic density membrane. The catalysed reaction is S-hexadecanoyl-L-cysteinyl-[protein] + H2O = L-cysteinyl-[protein] + hexadecanoate + H(+). In terms of biological role, hydrolyzes fatty acids from S-acylated cysteine residues in proteins. Has depalmitoylating activity towards NRAS. Has depalmitoylating activity towards DLG4/PSD95. May have depalmitoylating activity towards MAP6. The polypeptide is Alpha/beta hydrolase domain-containing protein 17A (Bos taurus (Bovine)).